The sequence spans 517 residues: Amidophosphoribosyltransferase (517 aa).

Met1 is modified (N-acetylmethionine). The propeptide occupies 1-11; the sequence is MELEELGIREE. The active-site Nucleophile is the Cys12. Residues 12–261 enclose the Glutamine amidotransferase type-2 domain; the sequence is CGVFGCIASG…PGEIVEISRH (250 aa). [4Fe-4S] cluster is bound at residue Cys280. Mg(2+) is bound by residues Ser327, Asp389, and Asp390. Cys426, Cys503, and Cys506 together coordinate [4Fe-4S] cluster.

It in the C-terminal section; belongs to the purine/pyrimidine phosphoribosyltransferase family. Homotetramer. Mg(2+) is required as a cofactor. Requires [4Fe-4S] cluster as cofactor.

It carries out the reaction 5-phospho-beta-D-ribosylamine + L-glutamate + diphosphate = 5-phospho-alpha-D-ribose 1-diphosphate + L-glutamine + H2O. It participates in purine metabolism; IMP biosynthesis via de novo pathway; N(1)-(5-phospho-D-ribosyl)glycinamide from 5-phospho-alpha-D-ribose 1-diphosphate: step 1/2. Its function is as follows. Catalyzes the formation of phosphoribosylamine from phosphoribosylpyrophosphate (PRPP) and glutamine. This chain is Amidophosphoribosyltransferase, found in Mus musculus (Mouse).